The primary structure comprises 659 residues: Mitochondrial Rho GTPase 1 (659 aa).

Residues 1-631 (MTKTRIRIVV…LTNDIDYRQT (631 aa)) lie on the Cytoplasmic side of the membrane. Residues 3–183 (KTRIRIVVCG…FYLCQRTITN (181 aa)) enclose the Miro 1 domain. GTP-binding positions include 12-19 (GDSGVGKT), 61-63 (DTG), and 115-118 (NKCD). 2 consecutive EF-hand domains span residues 199 to 234 (LGVL…CFSK) and 328 to 363 (LGYR…TPGL). The Ca(2+) site is built by D212, D214, D216, E223, D341, D343, D345, and E352. One can recognise a Miro 2 domain in the interval 444-609 (RKVLNCYMLG…FIKLTEVALE (166 aa)). GTP is bound by residues 453–460 (GKGNSGKS), 489–493 (ELKGG), and 558–561 (LKAD). A helical; Anchor for type IV membrane protein membrane pass occupies residues 632–652 (IVAISSVVGFASLFTFTALKI). At 653–659 (YSSFKNT) the chain is on the mitochondrial intermembrane side.

Belongs to the mitochondrial Rho GTPase family.

It localises to the mitochondrion outer membrane. Its function is as follows. Mitochondrial GTPase involved in mitochondrial trafficking. Probably involved in control of anterograde transport of mitochondria and their subcellular distribution. The protein is Mitochondrial Rho GTPase 1 (GEM1) of Kluyveromyces lactis (strain ATCC 8585 / CBS 2359 / DSM 70799 / NBRC 1267 / NRRL Y-1140 / WM37) (Yeast).